A 410-amino-acid polypeptide reads, in one-letter code: Beta-arrestin-1 (410 aa).

Residues Met1 to Ser163 form an interaction with SRC region. Residues Pro45–Ser86 are interaction with CHRM2. Tyr47 is modified (phosphotyrosine). 1D-myo-inositol hexakisphosphate-binding residues include Lys250, Met255, Lys324, and Lys326. Positions Ile318–Arg410 are interaction with TRAF6. Positions Arg385–Lys395 match the [DE]-X(1,2)-F-X-X-[FL]-X-X-X-R motif motif. The tract at residues Lys389–Arg410 is disordered. Residues Gly401 to Arg410 are compositionally biased toward polar residues. Residue Ser404 is modified to Phosphoserine; by GRK5.

The protein belongs to the arrestin family. As to quaternary structure, monomer. Homodimer. Homooligomer; the self-association is mediated by InsP6-binding. Heterooligomer with ARRB2; the association is mediated by InsP6-binding. Interacts with ADRB2 (phosphorylated). Interacts with CHRM2 (phosphorylated). Interacts with LHCGR. Interacts with CYTH2 and CASR. Interacts with AP2B1 (dephosphorylated); phosphorylation of AP2B1 disrupts the interaction. Interacts (dephosphorylated at Ser-404) with CLTC. Interacts with CCR2 and GRK2. Interacts with CRR5. Interacts with PTAFR (phosphorylated on serine residues). Interacts with CLTC and MAP2K3. Interacts with CREB1. Interacts with TRAF6. Interacts with IGF1R and MDM2. Interacts with C5AR1. Interacts with PDE4D. Interacts with SRC (via the SH3 domain and the protein kinase domain); the interaction is independent of the phosphorylation state of SRC C-terminus. Interacts with TACR1. Interacts with RAF1. Interacts with CHUK, IKBKB and MAP3K14. Interacts with DVL1; the interaction is enhanced by phosphorylation of DVL1. Interacts with DVL2; the interaction is enhanced by phosphorylation of DVL2. Interacts with IGF1R. Associates with MAP kinase p38. Part of a MAPK signaling complex consisting of TACR1, ARRB1, SRC, MAPK1 (activated) and MAPK3 (activated). Part of a MAPK signaling complex consisting of F2RL1, ARRB1, RAF1, MAPK1 (activated) and MAPK3 (activated). Interacts with GPR143. Interacts with MAP2K4/MKK4. Interacts with HCK and CXCR1 (phosphorylated). Interacts with ACKR3 and ACKR4. Interacts with ARRDC1; the interaction is direct. Interacts with GPR61, GPR62 and GPR135. In terms of processing, constitutively phosphorylated at in the cytoplasm. At the plasma membrane, is rapidly dephosphorylated, a process that is required for clathrin binding and ADRB2 endocytosis but not for ADRB2 binding and desensitization. Once internalized, is rephosphorylated. Post-translationally, the ubiquitination status appears to regulate the formation and trafficking of beta-arrestin-GPCR complexes and signaling. Ubiquitination appears to occur GPCR-specific. Ubiquitinated by MDM2; the ubiquitination is required for rapid internalization of ADRB2. Deubiquitinated by USP33; the deubiquitination leads to a dissociation of the beta-arrestin-GPCR complex. Stimulation of a class A GPCR, such as ADRB2, induces transient ubiquitination and subsequently promotes association with USP33.

Its subcellular location is the cytoplasm. It localises to the nucleus. The protein localises to the cell membrane. It is found in the membrane. The protein resides in the clathrin-coated pit. Its subcellular location is the cell projection. It localises to the pseudopodium. The protein localises to the cytoplasmic vesicle. In terms of biological role, functions in regulating agonist-mediated G-protein coupled receptor (GPCR) signaling by mediating both receptor desensitization and resensitization processes. During homologous desensitization, beta-arrestins bind to the GPRK-phosphorylated receptor and sterically preclude its coupling to the cognate G-protein; the binding appears to require additional receptor determinants exposed only in the active receptor conformation. The beta-arrestins target many receptors for internalization by acting as endocytic adapters (CLASPs, clathrin-associated sorting proteins) and recruiting the GPRCs to the adapter protein 2 complex 2 (AP-2) in clathrin-coated pits (CCPs). However, the extent of beta-arrestin involvement appears to vary significantly depending on the receptor, agonist and cell type. Internalized arrestin-receptor complexes traffic to intracellular endosomes, where they remain uncoupled from G-proteins. Two different modes of arrestin-mediated internalization occur. Class A receptors, like ADRB2, OPRM1, ENDRA, D1AR and ADRA1B dissociate from beta-arrestin at or near the plasma membrane and undergo rapid recycling. Class B receptors, like AVPR2, AGTR1, NTSR1, TRHR and TACR1 internalize as a complex with arrestin and traffic with it to endosomal vesicles, presumably as desensitized receptors, for extended periods of time. Receptor resensitization then requires that receptor-bound arrestin is removed so that the receptor can be dephosphorylated and returned to the plasma membrane. Involved in internalization of P2RY4 and UTP-stimulated internalization of P2RY2. Involved in phosphorylation-dependent internalization of OPRD1 ands subsequent recycling. Involved in the degradation of cAMP by recruiting cAMP phosphodiesterases to ligand-activated receptors. Beta-arrestins function as multivalent adapter proteins that can switch the GPCR from a G-protein signaling mode that transmits short-lived signals from the plasma membrane via small molecule second messengers and ion channels to a beta-arrestin signaling mode that transmits a distinct set of signals that are initiated as the receptor internalizes and transits the intracellular compartment. Acts as a signaling scaffold for MAPK pathways such as MAPK1/3 (ERK1/2). ERK1/2 activated by the beta-arrestin scaffold is largely excluded from the nucleus and confined to cytoplasmic locations such as endocytic vesicles, also called beta-arrestin signalosomes. Recruits c-Src/SRC to ADRB2 resulting in ERK activation. GPCRs for which the beta-arrestin-mediated signaling relies on both ARRB1 and ARRB2 (codependent regulation) include ADRB2, F2RL1 and PTH1R. For some GPCRs the beta-arrestin-mediated signaling relies on either ARRB1 or ARRB2 and is inhibited by the other respective beta-arrestin form (reciprocal regulation). Inhibits ERK1/2 signaling in AGTR1- and AVPR2-mediated activation (reciprocal regulation). Is required for SP-stimulated endocytosis of NK1R and recruits c-Src/SRC to internalized NK1R resulting in ERK1/2 activation, which is required for the antiapoptotic effects of SP. Is involved in proteinase-activated F2RL1-mediated ERK activity. Acts as a signaling scaffold for the AKT1 pathway. Is involved in alpha-thrombin-stimulated AKT1 signaling. Is involved in IGF1-stimulated AKT1 signaling leading to increased protection from apoptosis. Involved in activation of the p38 MAPK signaling pathway and in actin bundle formation. Involved in F2RL1-mediated cytoskeletal rearrangement and chemotaxis. Involved in AGTR1-mediated stress fiber formation by acting together with GNAQ to activate RHOA. Appears to function as signaling scaffold involved in regulation of MIP-1-beta-stimulated CCR5-dependent chemotaxis. Involved in attenuation of NF-kappa-B-dependent transcription in response to GPCR or cytokine stimulation by interacting with and stabilizing CHUK. May serve as nuclear messenger for GPCRs. Involved in OPRD1-stimulated transcriptional regulation by translocating to CDKN1B and FOS promoter regions and recruiting EP300 resulting in acetylation of histone H4. Involved in regulation of LEF1 transcriptional activity via interaction with DVL1 and/or DVL2 Also involved in regulation of receptors other than GPCRs. Involved in Toll-like receptor and IL-1 receptor signaling through the interaction with TRAF6 which prevents TRAF6 autoubiquitination and oligomerization required for activation of NF-kappa-B and JUN. Involved in IL8-mediated granule release in neutrophils. Binds phosphoinositides. Binds inositolhexakisphosphate (InsP6). Required for atypical chemokine receptor ACKR2-induced RAC1-LIMK1-PAK1-dependent phosphorylation of cofilin (CFL1) and for the up-regulation of ACKR2 from endosomal compartment to cell membrane, increasing its efficiency in chemokine uptake and degradation. Involved in the internalization of the atypical chemokine receptor ACKR3. Negatively regulates the NOTCH signaling pathway by mediating the ubiquitination and degradation of NOTCH1 by ITCH. Participates in the recruitment of the ubiquitin-protein ligase to the receptor. In Macaca fascicularis (Crab-eating macaque), this protein is Beta-arrestin-1 (ARRB1).